Here is a 458-residue protein sequence, read N- to C-terminus: UDP-N-acetylmuramoylalanine--D-glutamate ligase (458 aa).

Residue 124–130 coordinates ATP; sequence GSDGKTT.

This sequence belongs to the MurCDEF family.

Its subcellular location is the cytoplasm. It catalyses the reaction UDP-N-acetyl-alpha-D-muramoyl-L-alanine + D-glutamate + ATP = UDP-N-acetyl-alpha-D-muramoyl-L-alanyl-D-glutamate + ADP + phosphate + H(+). The protein operates within cell wall biogenesis; peptidoglycan biosynthesis. In terms of biological role, cell wall formation. Catalyzes the addition of glutamate to the nucleotide precursor UDP-N-acetylmuramoyl-L-alanine (UMA). This Clostridium botulinum (strain ATCC 19397 / Type A) protein is UDP-N-acetylmuramoylalanine--D-glutamate ligase.